Consider the following 150-residue polypeptide: Transcriptional regulator MraZ (150 aa).

SpoVT-AbrB domains are found at residues Val-5–Glu-51 and Ala-80–Thr-123.

This sequence belongs to the MraZ family. As to quaternary structure, forms oligomers.

The protein resides in the cytoplasm. It is found in the nucleoid. The polypeptide is Transcriptional regulator MraZ (Thioalkalivibrio sulfidiphilus (strain HL-EbGR7)).